Here is a 1072-residue protein sequence, read N- to C-terminus: Carbamoyl phosphate synthase large chain (1072 aa).

The carboxyphosphate synthetic domain stretch occupies residues 1–401 (MPKRLDINTI…SLLKAVRSLE (401 aa)). Residues Arg-129, Arg-169, Gly-175, Gly-176, Lys-208, Ile-210, Glu-215, Gly-241, Val-242, His-243, Gln-284, and Glu-298 each contribute to the ATP site. In terms of domain architecture, ATP-grasp 1 spans 133–327 (RTLMQELNEP…IAKLAAKIAV (195 aa)). Positions 284, 298, and 300 each coordinate Mg(2+). The Mn(2+) site is built by Gln-284, Glu-298, and Asn-300. Residues 402–546 (LGIYHLELNH…YSTYGDENES (145 aa)) are oligomerization domain. Residues 547–929 (IVTERKSVMV…ALYKGLVAAG (383 aa)) form a carbamoyl phosphate synthetic domain region. The region spanning 671–861 (EAALTELGIP…MANIATKVIL (191 aa)) is the ATP-grasp 2 domain. Residues Arg-707, Arg-746, Glu-752, Gly-777, Val-778, His-779, Ser-780, Gln-820, and Glu-832 each coordinate ATP. Mg(2+)-binding residues include Gln-820, Glu-832, and Asn-834. Mn(2+)-binding residues include Gln-820, Glu-832, and Asn-834. The 143-residue stretch at 930–1072 (ISIPTHGSVI…PTTRHEVVHA (143 aa)) folds into the MGS-like domain. The interval 930-1072 (ISIPTHGSVI…PTTRHEVVHA (143 aa)) is allosteric domain.

Belongs to the CarB family. As to quaternary structure, composed of two chains; the small (or glutamine) chain promotes the hydrolysis of glutamine to ammonia, which is used by the large (or ammonia) chain to synthesize carbamoyl phosphate. Tetramer of heterodimers (alpha,beta)4. It depends on Mg(2+) as a cofactor. The cofactor is Mn(2+).

It carries out the reaction hydrogencarbonate + L-glutamine + 2 ATP + H2O = carbamoyl phosphate + L-glutamate + 2 ADP + phosphate + 2 H(+). It catalyses the reaction hydrogencarbonate + NH4(+) + 2 ATP = carbamoyl phosphate + 2 ADP + phosphate + 2 H(+). The protein operates within amino-acid biosynthesis; L-arginine biosynthesis; carbamoyl phosphate from bicarbonate: step 1/1. It participates in pyrimidine metabolism; UMP biosynthesis via de novo pathway; (S)-dihydroorotate from bicarbonate: step 1/3. Large subunit of the glutamine-dependent carbamoyl phosphate synthetase (CPSase). CPSase catalyzes the formation of carbamoyl phosphate from the ammonia moiety of glutamine, carbonate, and phosphate donated by ATP, constituting the first step of 2 biosynthetic pathways, one leading to arginine and/or urea and the other to pyrimidine nucleotides. The large subunit (synthetase) binds the substrates ammonia (free or transferred from glutamine from the small subunit), hydrogencarbonate and ATP and carries out an ATP-coupled ligase reaction, activating hydrogencarbonate by forming carboxy phosphate which reacts with ammonia to form carbamoyl phosphate. This is Carbamoyl phosphate synthase large chain from Bacillus cytotoxicus (strain DSM 22905 / CIP 110041 / 391-98 / NVH 391-98).